A 743-amino-acid chain; its full sequence is Glycerol-3-phosphate O-acyltransferase 2 (743 aa).

Topologically, residues 1–34 are lumenal; the sequence is MSAPAADHNAAKPIPHVPQASRRYKNSYNGFVYN. The chain crosses the membrane as a helical span at residues 35-55; that stretch reads IHTWLYDVSVFLFNILFTIFF. Residues 56–442 lie on the Cytoplasmic side of the membrane; sequence REIKVRGAYN…TKLEALRCFV (387 aa). The chain crosses the membrane as a helical span at residues 443–457; it reads TLIVRLIKFSVFAIL. Residue serine 458 is a topological domain, lumenal. A helical membrane pass occupies residues 459–473; sequence LPGSILFTPIFIICR. Topologically, residues 474–501 are cytoplasmic; the sequence is VYSEKKAKEGLKKSLVKIKGTDLLATWK. Residues 502 to 522 form a helical membrane-spanning segment; the sequence is LIVALILAPILYVTYSILLII. Residues 523-531 lie on the Lumenal side of the membrane; sequence LARKQHYCR. A helical membrane pass occupies residues 532-552; it reads IWVPSNNAFIQFVYFYALLVF. Residues 553–743 are Cytoplasmic-facing; that stretch reads TTYSSLKTGE…RQKREHEKKE (191 aa). Phosphoserine is present on residues serine 632, serine 637, serine 647, serine 651, serine 654, serine 657, serine 664, serine 668, and serine 671. Threonine 673 is subject to Phosphothreonine. Residues 682–743 form a disordered region; it reads KQGQWKSEGE…RQKREHEKKE (62 aa). At serine 688 the chain carries Phosphoserine. Over residues 691–700 the composition is skewed to acidic residues; it reads ETSEDEDEFD. Threonine 692 is modified (phosphothreonine). Phosphoserine is present on serine 693.

Belongs to the GPAT/DAPAT family. In terms of processing, phosphorylated at a conserved motif involving Ser-664, Ser-668 and Ser-671. This phosphorylation plays a critical role for efficient TAG mobilization. Phosphorylation deficiency at this motif increases the enzyme activity and consequently induces de novo formation of phosphatidic acid.

The protein localises to the lipid droplet. Its subcellular location is the endoplasmic reticulum membrane. The catalysed reaction is sn-glycerol 3-phosphate + an acyl-CoA = a 1-acyl-sn-glycero-3-phosphate + CoA. It catalyses the reaction dihydroxyacetone phosphate + an acyl-CoA = a 1-acylglycerone 3-phosphate + CoA. The enzyme catalyses sn-glycerol 3-phosphate + hexadecanoyl-CoA = 1-hexadecanoyl-sn-glycero-3-phosphate + CoA. It carries out the reaction (9Z)-hexadecenoyl-CoA + sn-glycerol 3-phosphate = 1-(9Z-hexadecenoyl)-sn-glycero-3-phosphate + CoA. The catalysed reaction is sn-glycerol 3-phosphate + octadecanoyl-CoA = 1-octadecanoyl-sn-glycero-3-phosphate + CoA. It catalyses the reaction sn-glycerol 3-phosphate + (9Z)-octadecenoyl-CoA = 1-(9Z-octadecenoyl)-sn-glycero-3-phosphate + CoA. Its pathway is phospholipid metabolism; CDP-diacylglycerol biosynthesis; CDP-diacylglycerol from sn-glycerol 3-phosphate: step 1/3. Dual substrate-specific glycerol-3-phosphate/dihydroxyacetone phosphate sn-1 acyltransferase, catalyzing the first and committed reaction in the de novo synthesis of glycerophospholipids and triacylglycerols (TAGs). Can use both Gly-3-P and dihydroxyacetone phosphate with similar efficiencies and has a broad fatty acyl-CoA specificity profile. Transfers a fatty acid from fatty acyl-CoA to the sn-1 position of glycerol-3-phosphate to produce lysophosphatidic acid (LysoPA). These lipids not only are precursors of glycerolipids, but also are dynamic components of signal transduction systems that control cell physiology. This is Glycerol-3-phosphate O-acyltransferase 2 (GPT2) from Saccharomyces cerevisiae (strain ATCC 204508 / S288c) (Baker's yeast).